A 427-amino-acid polypeptide reads, in one-letter code: Glutamate-1-semialdehyde 2,1-aminomutase (427 aa).

Lysine 265 bears the N6-(pyridoxal phosphate)lysine mark.

Belongs to the class-III pyridoxal-phosphate-dependent aminotransferase family. HemL subfamily. As to quaternary structure, homodimer. The cofactor is pyridoxal 5'-phosphate.

It is found in the cytoplasm. It carries out the reaction (S)-4-amino-5-oxopentanoate = 5-aminolevulinate. Its pathway is porphyrin-containing compound metabolism; protoporphyrin-IX biosynthesis; 5-aminolevulinate from L-glutamyl-tRNA(Glu): step 2/2. In Pseudomonas putida (strain ATCC 47054 / DSM 6125 / CFBP 8728 / NCIMB 11950 / KT2440), this protein is Glutamate-1-semialdehyde 2,1-aminomutase.